Reading from the N-terminus, the 695-residue chain is Probable rhamnogalacturonate lyase C (695 aa).

Positions 1-21 (MFLPSRKALAFLACLASHSVA) are cleaved as a signal peptide. N-linked (GlcNAc...) asparagine glycans are attached at residues Asn28, Asn96, Asn118, Asn144, Asn199, Asn285, Asn532, and Asn638.

The protein belongs to the polysaccharide lyase 4 family.

The protein resides in the secreted. The catalysed reaction is Endotype eliminative cleavage of L-alpha-rhamnopyranosyl-(1-&gt;4)-alpha-D-galactopyranosyluronic acid bonds of rhamnogalacturonan I domains in ramified hairy regions of pectin leaving L-rhamnopyranose at the reducing end and 4-deoxy-4,5-unsaturated D-galactopyranosyluronic acid at the non-reducing end.. In terms of biological role, pectinolytic enzymes consist of four classes of enzymes: pectin lyase, polygalacturonase, pectin methylesterase and rhamnogalacturonase. Degrades the rhamnogalacturonan I (RG-I) backbone of pectin. In Aspergillus oryzae (strain ATCC 42149 / RIB 40) (Yellow koji mold), this protein is Probable rhamnogalacturonate lyase C (rglC).